We begin with the raw amino-acid sequence, 230 residues long: Fibrillarin-like rRNA/tRNA 2'-O-methyltransferase (230 aa).

S-adenosyl-L-methionine-binding positions include 87-88 (TT), 105-106 (EF), 130-131 (DA), and 150-153 (DVAQ).

The protein belongs to the methyltransferase superfamily. Fibrillarin family. In terms of assembly, interacts with nop5. Component of box C/D small ribonucleoprotein (sRNP) particles that contain rpl7ae, FlpA and nop5, plus a guide RNA.

Involved in pre-rRNA and tRNA processing. Utilizes the methyl donor S-adenosyl-L-methionine to catalyze the site-specific 2'-hydroxyl methylation of ribose moieties in rRNA and tRNA. Site specificity is provided by a guide RNA that base pairs with the substrate. Methylation occurs at a characteristic distance from the sequence involved in base pairing with the guide RNA. This chain is Fibrillarin-like rRNA/tRNA 2'-O-methyltransferase, found in Methanococcus vannielii (strain ATCC 35089 / DSM 1224 / JCM 13029 / OCM 148 / SB).